Reading from the N-terminus, the 325-residue chain is ATP phosphoribosyltransferase (325 aa).

This sequence belongs to the ATP phosphoribosyltransferase family. Long subfamily. Mg(2+) serves as cofactor.

Its subcellular location is the cytoplasm. The enzyme catalyses 1-(5-phospho-beta-D-ribosyl)-ATP + diphosphate = 5-phospho-alpha-D-ribose 1-diphosphate + ATP. Its pathway is amino-acid biosynthesis; L-histidine biosynthesis; L-histidine from 5-phospho-alpha-D-ribose 1-diphosphate: step 1/9. Its activity is regulated as follows. Feedback inhibited by histidine. Catalyzes the condensation of ATP and 5-phosphoribose 1-diphosphate to form N'-(5'-phosphoribosyl)-ATP (PR-ATP). Has a crucial role in the pathway because the rate of histidine biosynthesis seems to be controlled primarily by regulation of HisG enzymatic activity. The sequence is that of ATP phosphoribosyltransferase from Bradyrhizobium sp. (strain ORS 278).